Reading from the N-terminus, the 713-residue chain is Serologically defined colon cancer antigen 8 (713 aa).

Phosphoserine occurs at positions 4 and 28. Residues 84-103 (QADKESEVSPSRRRKMSPLR) form a disordered region. The stretch at 129-175 (IHHLEAEVKFCKEELSGMKNKIQVVVLENEGLQQQLKSQRQEETLRE) forms a coiled coil. Residues 194 to 215 (EDSGVGETSKRPFSHDNADFGK) are disordered. Residues 201 to 212 (TSKRPFSHDNAD) are compositionally biased toward basic and acidic residues. The interval 216–713 (AASAGEQLEL…QLPSMPQSDC (498 aa)) is sufficient for homodimerization. Coiled coils occupy residues 223–273 (LELE…LLAA) and 348–707 (EEAN…QLPS). The mediates interaction with OFD1 stretch occupies residues 533 to 713 (HQLHLTRQEK…QLPSMPQSDC (181 aa)).

As to quaternary structure, homodimer. Interacts with OFD1; the interaction is direct. Interacts with FAM161A. Interacts with RABEP2, ERC1 and CEP131. In terms of tissue distribution, expressed in thymus, prostate, testis, ovary, small intestine, colon, mucosa, colon and renal cancer tumors.

It localises to the cytoplasm. The protein resides in the cytoskeleton. Its subcellular location is the microtubule organizing center. It is found in the centrosome. The protein localises to the centriole. It localises to the cilium basal body. The protein resides in the cell junction. Functionally, plays a role in the establishment of cell polarity and epithelial lumen formation. Also plays an essential role in ciliogenesis and subsequent Hedgehog signaling pathway that requires the presence of intact primary cilia for pathway activation. Mechanistically, interacts with and mediates RABEP2 centrosomal localization which is critical for ciliogenesis. This is Serologically defined colon cancer antigen 8 (SDCCAG8) from Homo sapiens (Human).